The sequence spans 225 residues: Single-pass membrane and coiled-coil domain-containing protein 3 (225 aa).

A coiled-coil region spans residues 69-92; the sequence is IIQAMTKIQKELQKIDEALKDQLE. Residues 155 to 175 traverse the membrane as a helical segment; sequence IGTSLLGSIGVAVLSLGIDMI. A coiled-coil region spans residues 182–209; sequence AVERTQLQAAIKSYEKHLEEFKAASAKY.

The protein resides in the membrane. The protein is Single-pass membrane and coiled-coil domain-containing protein 3 (Smco3) of Mus musculus (Mouse).